The sequence spans 351 residues: Nicotinate-nucleotide--dimethylbenzimidazole phosphoribosyltransferase (351 aa).

E317 functions as the Proton acceptor in the catalytic mechanism.

It belongs to the CobT family.

The enzyme catalyses 5,6-dimethylbenzimidazole + nicotinate beta-D-ribonucleotide = alpha-ribazole 5'-phosphate + nicotinate + H(+). The protein operates within nucleoside biosynthesis; alpha-ribazole biosynthesis; alpha-ribazole from 5,6-dimethylbenzimidazole: step 1/2. Functionally, catalyzes the synthesis of alpha-ribazole-5'-phosphate from nicotinate mononucleotide (NAMN) and 5,6-dimethylbenzimidazole (DMB). The protein is Nicotinate-nucleotide--dimethylbenzimidazole phosphoribosyltransferase of Bradyrhizobium sp. (strain BTAi1 / ATCC BAA-1182).